Reading from the N-terminus, the 157-residue chain is Ribosome-binding factor A (157 aa).

Residues 124–157 (SAGAQFAGDADPYRKPESDDESDTAAKTDGDAAE) form a disordered region. The segment covering 147–157 (TAAKTDGDAAE) has biased composition (basic and acidic residues).

Belongs to the RbfA family. As to quaternary structure, monomer. Binds 30S ribosomal subunits, but not 50S ribosomal subunits or 70S ribosomes.

It is found in the cytoplasm. One of several proteins that assist in the late maturation steps of the functional core of the 30S ribosomal subunit. Associates with free 30S ribosomal subunits (but not with 30S subunits that are part of 70S ribosomes or polysomes). Required for efficient processing of 16S rRNA. May interact with the 5'-terminal helix region of 16S rRNA. The chain is Ribosome-binding factor A from Streptomyces avermitilis (strain ATCC 31267 / DSM 46492 / JCM 5070 / NBRC 14893 / NCIMB 12804 / NRRL 8165 / MA-4680).